A 250-amino-acid polypeptide reads, in one-letter code: Isoprenyl transferase (250 aa).

The active site involves aspartate 26. Aspartate 26 contributes to the Mg(2+) binding site. Substrate contacts are provided by residues 27-30 (GNGR), tryptophan 31, arginine 39, histidine 43, and 71-73 (STE). The Proton acceptor role is filled by asparagine 74. Substrate contacts are provided by residues tryptophan 75, arginine 77, arginine 198, and 204-206 (RLS). A Mg(2+)-binding site is contributed by glutamate 217.

This sequence belongs to the UPP synthase family. In terms of assembly, homodimer. The cofactor is Mg(2+).

Its function is as follows. Catalyzes the condensation of isopentenyl diphosphate (IPP) with allylic pyrophosphates generating different type of terpenoids. The protein is Isoprenyl transferase of Streptococcus agalactiae serotype III (strain NEM316).